The chain runs to 223 residues: Phosphoribosylformylglycinamidine synthase subunit PurQ (223 aa).

The region spanning 2 to 223 (KTAIIQLPGL…FQSALELAKG (222 aa)) is the Glutamine amidotransferase type-1 domain. The active-site Nucleophile is the C86. Active-site residues include H196 and E198.

Part of the FGAM synthase complex composed of 1 PurL, 1 PurQ and 2 PurS subunits.

Its subcellular location is the cytoplasm. It carries out the reaction N(2)-formyl-N(1)-(5-phospho-beta-D-ribosyl)glycinamide + L-glutamine + ATP + H2O = 2-formamido-N(1)-(5-O-phospho-beta-D-ribosyl)acetamidine + L-glutamate + ADP + phosphate + H(+). The enzyme catalyses L-glutamine + H2O = L-glutamate + NH4(+). Its pathway is purine metabolism; IMP biosynthesis via de novo pathway; 5-amino-1-(5-phospho-D-ribosyl)imidazole from N(2)-formyl-N(1)-(5-phospho-D-ribosyl)glycinamide: step 1/2. In terms of biological role, part of the phosphoribosylformylglycinamidine synthase complex involved in the purines biosynthetic pathway. Catalyzes the ATP-dependent conversion of formylglycinamide ribonucleotide (FGAR) and glutamine to yield formylglycinamidine ribonucleotide (FGAM) and glutamate. The FGAM synthase complex is composed of three subunits. PurQ produces an ammonia molecule by converting glutamine to glutamate. PurL transfers the ammonia molecule to FGAR to form FGAM in an ATP-dependent manner. PurS interacts with PurQ and PurL and is thought to assist in the transfer of the ammonia molecule from PurQ to PurL. This Bartonella henselae (strain ATCC 49882 / DSM 28221 / CCUG 30454 / Houston 1) (Rochalimaea henselae) protein is Phosphoribosylformylglycinamidine synthase subunit PurQ.